The primary structure comprises 316 residues: tRNA pseudouridine synthase B (316 aa).

Asp-47 (nucleophile) is an active-site residue.

Belongs to the pseudouridine synthase TruB family. Type 1 subfamily.

The enzyme catalyses uridine(55) in tRNA = pseudouridine(55) in tRNA. Its function is as follows. Responsible for synthesis of pseudouridine from uracil-55 in the psi GC loop of transfer RNAs. This Aliivibrio fischeri (strain ATCC 700601 / ES114) (Vibrio fischeri) protein is tRNA pseudouridine synthase B.